A 402-amino-acid polypeptide reads, in one-letter code: Phosphoglycerate kinase (402 aa).

Substrate-binding positions include 24–26 (DFN), arginine 40, 63–66 (HFGR), arginine 122, and arginine 155. ATP-binding positions include lysine 206, glycine 297, glutamate 328, and 357–360 (GGDS).

The protein belongs to the phosphoglycerate kinase family. Monomer.

It localises to the cytoplasm. The enzyme catalyses (2R)-3-phosphoglycerate + ATP = (2R)-3-phospho-glyceroyl phosphate + ADP. The protein operates within carbohydrate degradation; glycolysis; pyruvate from D-glyceraldehyde 3-phosphate: step 2/5. This chain is Phosphoglycerate kinase, found in Synechococcus sp. (strain ATCC 27144 / PCC 6301 / SAUG 1402/1) (Anacystis nidulans).